The sequence spans 298 residues: N-acetylmuramic acid 6-phosphate etherase 2 (298 aa).

Positions 51–214 (IVSRFEQGGR…STAAMVRLGR (164 aa)) constitute an SIS domain. The active-site Proton donor is Glu-79. The active site involves Glu-110.

Belongs to the GCKR-like family. MurNAc-6-P etherase subfamily. In terms of assembly, homodimer.

The catalysed reaction is N-acetyl-D-muramate 6-phosphate + H2O = N-acetyl-D-glucosamine 6-phosphate + (R)-lactate. Its pathway is amino-sugar metabolism; N-acetylmuramate degradation. Its function is as follows. Specifically catalyzes the cleavage of the D-lactyl ether substituent of MurNAc 6-phosphate, producing GlcNAc 6-phosphate and D-lactate. The protein is N-acetylmuramic acid 6-phosphate etherase 2 of Bacillus licheniformis (strain ATCC 14580 / DSM 13 / JCM 2505 / CCUG 7422 / NBRC 12200 / NCIMB 9375 / NCTC 10341 / NRRL NRS-1264 / Gibson 46).